The primary structure comprises 173 residues: Peptidoglycan-associated lipoprotein (173 aa).

A signal peptide spans 1–21 (MKSKKIFKILTLLLPMITTFS). Cysteine 22 carries N-palmitoyl cysteine lipidation. Residue cysteine 22 is the site of S-diacylglycerol cysteine attachment. Residues 59-173 (ETLEKLKKGN…KNRRSVIIYQ (115 aa)) enclose the OmpA-like domain.

Belongs to the Pal lipoprotein family.

It is found in the cell outer membrane. This is Peptidoglycan-associated lipoprotein from Buchnera aphidicola subsp. Baizongia pistaciae (strain Bp).